The following is a 1573-amino-acid chain: Soluble scavenger receptor cysteine-rich domain-containing protein SSC5D (1573 aa).

The N-terminal stretch at 1–16 (MRVLACLLAALVGIQA) is a signal peptide. The SRCR 1 domain occupies 20–120 (LRLADGPHGC…HEEDAGVVCA (101 aa)). 3 cysteine pairs are disulfide-bonded: cysteine 45/cysteine 109, cysteine 58/cysteine 119, and cysteine 89/cysteine 99. A disordered region spans residues 153-192 (EPLVTHAPRPAGNPQNASRKKSPRPKQAKSTRAPLLTTGA). A glycan (N-linked (GlcNAc...) asparagine) is linked at asparagine 168. Basic residues predominate over residues 170 to 181 (SRKKSPRPKQAK). 2 SRCR domains span residues 198 to 298 (LRLV…LVCT) and 304 to 404 (LRLA…AVCD). 6 cysteine pairs are disulfide-bonded: cysteine 223-cysteine 287, cysteine 236-cysteine 297, cysteine 267-cysteine 277, cysteine 329-cysteine 393, cysteine 342-cysteine 403, and cysteine 373-cysteine 383. 2 N-linked (GlcNAc...) asparagine glycosylation sites follow: asparagine 376 and asparagine 420. The interval 412–465 (PPTAPTDSNNSTPREAASRPPSTMTSQAPGTAGVSPPPASPTVLWEPGPEAGSP) is disordered. Over residues 431 to 440 (PPSTMTSQAP) the composition is skewed to polar residues. The 102-residue stretch at 467 to 568 (LRLVAGPSKC…HNEDVGVTCT (102 aa)) folds into the SRCR 4 domain. 3 disulfides stabilise this stretch: cysteine 492–cysteine 557, cysteine 505–cysteine 567, and cysteine 537–cysteine 547. The tract at residues 614-769 (EKTTTKAPGK…SVSTTGESGL (156 aa)) is disordered. Residues 626-637 (KSTKKWVTKNAK) show a composition bias toward basic residues. A compositionally biased stretch (polar residues) spans 654-671 (AQSPPDLTSQTTAALTTE). Residues 672 to 685 (ASRRPTSEFTRRPT) show a composition bias toward basic and acidic residues. Composition is skewed to polar residues over residues 687–702 (EAPQRWTSHTTATLTP) and 711–735 (KTMAMLTTQGPQEMTSESTIKSIPQ). An SRCR 5 domain is found at 772-872 (VRLADGPNRC…HEEDVGLTCT (101 aa)). 3 disulfide bridges follow: cysteine 797–cysteine 861, cysteine 810–cysteine 871, and cysteine 841–cysteine 851. Disordered regions lie at residues 895-1475 (KGTT…PCVA) and 1554-1573 (MPAPTTTTPEEEERPLRGDV). Positions 924 to 934 (RLPDTGSKDGY) are enriched in basic and acidic residues. Composition is skewed to pro residues over residues 1004–1020 (PPTPSPGPSASPGPPGP) and 1083–1093 (TPEPSPTPLPT). A compositionally biased stretch (polar residues) spans 1101–1140 (DPSTPSEVTSLSPTSEQVPESDTTPDLDTTPYSSTVSEYS). Residues 1144-1160 (DPSPSPHPTTTPDPTMA) show a composition bias toward pro residues. Composition is skewed to low complexity over residues 1161–1175 (PDPITTLNPTVTPHF) and 1185–1277 (PHPT…MPHP). The span at 1278–1328 (TTTPHPTTTPHPTTTPHPTTTPHPTMTPDPTTTPYPTTTPDPTTTPHPTTP) shows a compositional bias: pro residues. 2 stretches are compositionally biased toward polar residues: residues 1335–1354 (VITTVSLPTSLGTELSSPTL) and 1364–1380 (PQLTFTAPAPHTSTSQI). The segment covering 1381–1401 (PTLEPSPALESSPSRSSTATS) has biased composition (low complexity). Pro residues predominate over residues 1464–1475 (GQSPGPHGPCVA).

Interacts with LGALS1 and laminin. In terms of tissue distribution, highly expressed in monocytes/macrophages and T-lymphocytes. Highly expressed in placenta and spleen, and also detected at lower levels in colon, and more weakly in lung, heart and kidney.

It is found in the secreted. It localises to the cytoplasm. Binds to extracellular matrix proteins. Binds to pathogen-associated molecular patterns (PAMPs) present on the cell walls of Gram-positive and Gram-negative bacteria and fungi, behaving as a pattern recognition receptor (PRR). Induces bacterial and fungal aggregation and subsequent inhibition of PAMP-induced cytokine release. Does not possess intrinsic bactericidal activity. May play a role in the innate defense and homeostasis of certain epithelial surfaces. The polypeptide is Soluble scavenger receptor cysteine-rich domain-containing protein SSC5D (SSC5D) (Homo sapiens (Human)).